We begin with the raw amino-acid sequence, 255 residues long: Dehydrogenase/reductase SDR family member 11 (255 aa).

Positions 1–25 (MERWRDRLALVTGASGGIGAAVARA) are cleaved as a signal peptide. NADP(+) contacts are provided by residues 13-18 (GASGGI), 38-39 (RT), E44, 65-66 (DL), and N92. The substrate site is built by S146 and Y161. NADP(+) contacts are provided by residues Y161, K165, 196 to 199 (VETQ), and K203. Y161 functions as the Proton acceptor in the catalytic mechanism.

Belongs to the short-chain dehydrogenases/reductases (SDR) family.

It localises to the secreted. It catalyses the reaction a 3beta-hydroxysteroid + NADP(+) = a 3-oxosteroid + NADPH + H(+). It carries out the reaction 17beta-estradiol + NAD(+) = estrone + NADH + H(+). The enzyme catalyses 17beta-estradiol + NADP(+) = estrone + NADPH + H(+). The protein operates within steroid biosynthesis; estrogen biosynthesis. With respect to regulation, inhibited by flavonoids including apigenin, luteolin, genistein, kaempferol and quercetin and also by carbenoxolone, zearalenone, glycyrrhetinic, curcumin and flufenamic acid. Catalyzes the conversion of the 17-keto group of estrone, 4- and 5-androstenes and 5-alpha-androstanes into their 17-beta-hydroxyl metabolites and the conversion of the 3-keto group of 3-, 3,17- and 3,20- diketosteroids into their 3-hydroxyl metabolites. Exhibits reductive 3-beta-hydroxysteroid dehydrogenase activity toward 5-beta-androstanes, 5-beta-pregnanes, 4-pregnenes and bile acids. May also reduce endogenous and exogenous alpha-dicarbonyl compounds and xenobiotic alicyclic ketones. The polypeptide is Dehydrogenase/reductase SDR family member 11 (DHRS11) (Bos taurus (Bovine)).